The primary structure comprises 416 residues: 3-isopropylmalate dehydratase large subunit (416 aa).

[4Fe-4S] cluster contacts are provided by Cys-299, Cys-357, and Cys-360.

The protein belongs to the aconitase/IPM isomerase family. LeuC type 2 subfamily. In terms of assembly, heterodimer of LeuC and LeuD. Requires [4Fe-4S] cluster as cofactor.

It catalyses the reaction (2R,3S)-3-isopropylmalate = (2S)-2-isopropylmalate. It participates in amino-acid biosynthesis; L-leucine biosynthesis; L-leucine from 3-methyl-2-oxobutanoate: step 2/4. In terms of biological role, catalyzes the isomerization between 2-isopropylmalate and 3-isopropylmalate, via the formation of 2-isopropylmaleate. The polypeptide is 3-isopropylmalate dehydratase large subunit (Saccharolobus solfataricus (strain ATCC 35092 / DSM 1617 / JCM 11322 / P2) (Sulfolobus solfataricus)).